Reading from the N-terminus, the 421-residue chain is Mitochondrial distribution and morphology protein 10 (421 aa).

This sequence belongs to the MDM10 family. In terms of assembly, component of the ER-mitochondria encounter structure (ERMES) or MDM complex, composed of MMM1, MDM10, MDM12 and MDM34. Associates with the mitochondrial outer membrane sorting assembly machinery SAM(core) complex.

It localises to the mitochondrion outer membrane. Functionally, component of the ERMES/MDM complex, which serves as a molecular tether to connect the endoplasmic reticulum and mitochondria. Components of this complex are involved in the control of mitochondrial shape and protein biogenesis and may function in phospholipid exchange. MDM10 is involved in the late assembly steps of the general translocase of the mitochondrial outer membrane (TOM complex). Functions in the TOM40-specific route of the assembly of outer membrane beta-barrel proteins, including the association of TOM40 with the receptor TOM22 and small TOM proteins. Can associate with the SAM(core) complex as well as the MDM12-MMM1 complex, both involved in late steps of the major beta-barrel assembly pathway, that is responsible for biogenesis of all outer membrane beta-barrel proteins. May act as a switch that shuttles between both complexes and channels precursor proteins into the TOM40-specific pathway. Plays a role in mitochondrial morphology and in the inheritance of mitochondria. The sequence is that of Mitochondrial distribution and morphology protein 10 from Vanderwaltozyma polyspora (strain ATCC 22028 / DSM 70294 / BCRC 21397 / CBS 2163 / NBRC 10782 / NRRL Y-8283 / UCD 57-17) (Kluyveromyces polysporus).